The primary structure comprises 239 residues: Large ribosomal subunit protein uL3 (239 aa).

N5-methylglutamine is present on glutamine 151.

This sequence belongs to the universal ribosomal protein uL3 family. Part of the 50S ribosomal subunit. Forms a cluster with proteins L14 and L19. In terms of processing, methylated by PrmB.

Its function is as follows. One of the primary rRNA binding proteins, it binds directly near the 3'-end of the 23S rRNA, where it nucleates assembly of the 50S subunit. The chain is Large ribosomal subunit protein uL3 from Ruegeria sp. (strain TM1040) (Silicibacter sp.).